Reading from the N-terminus, the 191-residue chain is Salivary lipocalin (191 aa).

The signal sequence occupies residues 1–16 (MKLLLLLCLGLTLASS). An N-linked (GlcNAc...) asparagine glycan is attached at N69. C84 and C176 form a disulfide bridge.

Belongs to the calycin superfamily. Lipocalin family. In terms of assembly, homodimer. As to expression, in the submaxillary salivary glands of mature male pigs, but absent from that of females. Expression was much lower in submaxillary glands of castrated male pigs than in sexually mature individuals.

The protein resides in the secreted. Binds pheromones, the pheromones are released from the saliva of males and affect the sexual behavior of females. In Sus scrofa (Pig), this protein is Salivary lipocalin (SAL1).